The chain runs to 703 residues: Solute carrier family 28 member 3 (703 aa).

Basic and acidic residues predominate over residues 1–19 (MSRADPGKNSEPSESKMSL). Residues 1-93 (MSRADPGKNS…DPEDDSEDEH (93 aa)) form a disordered region. The Cytoplasmic portion of the chain corresponds to 1–117 (MSRADPGKNS…FCRKHRVVLR (117 aa)). The segment covering 44–61 (QNTPGNSTVRNRVVQSGE) has biased composition (polar residues). A compositionally biased stretch (basic and acidic residues) spans 63-72 (GHAKQDDRQI). The chain crosses the membrane as a helical span at residues 118–138 (STIWAVLLTGFLALVIAACAI). Over 139-143 (NFHRA) the chain is Extracellular. Residues 144-164 (LPLFVITLVTIFFVIWDHLMA) traverse the membrane as a helical segment. The Cytoplasmic portion of the chain corresponds to 165 to 188 (KYEQRIDDFLSPGRRLLDRHWFWL). Residues 189–209 (KWVVWSSLILAIILWLSLDTA) form a helical membrane-spanning segment. At 210-212 (KLG) the chain is on the extracellular side. Residues 213 to 234 (QQNLVSFGGLIMYLILLFLFSK) traverse the membrane as a helical segment. Over 235–242 (HPTRVYWR) the chain is Cytoplasmic. A helical membrane pass occupies residues 243–262 (PVFWGIGLQFLLGLLILRTR). Over 263–299 (PGFVAFDWMGRQVQTFLGYTDTGARFVFGEKYTDHFF) the chain is Extracellular. The helical transmembrane segment at 300-320 (AFKILPIVVFFSTVMSMLYYL) threads the bilayer. Residues 321 to 344 (GLMQWIIRKVGWLMLVTMGSSPIE) lie on the Cytoplasmic side of the membrane. Positions 345–363 (SVVAAGNIFIGQTESPLLV) form an intramembrane region, helical. The Cytoplasmic segment spans residues 364 to 376 (QPYLPHVTKSELH). A helical transmembrane segment spans residues 377–399 (TIMTAGFATIAGSVLGAYISFGV). The Extracellular segment spans residues 400–401 (SS). A helical transmembrane segment spans residues 402–423 (THLLTASVMSAPAALAVAKLFW). The Cytoplasmic segment spans residues 424–458 (PETEKPKITLKSAMKMENGDSRNLLEAASQGASSS). Residues 459–484 (IPLVANIAANLIAFLALLSFVNSALS) form a helical membrane-spanning segment. Residues 485–522 (WFGSMFNYPELSFELICSYIFMPFSFMMGVDWQDSFMV) are Extracellular-facing. Residues 523 to 542 (AKLIGYKTFFNEFVAYDHLS) constitute an intramembrane region (helical). The Extracellular segment spans residues 543-581 (KLINLRKAAGPKFVNGVQQYMSIRSETIATYALCGFANF). A helical transmembrane segment spans residues 582–592 (GSLGIVIGGLT). The Cytoplasmic segment spans residues 593–605 (SIAPSRKRDIASG). Residues 606 to 628 (AMRALIAGTIACFMTACIAGILS) traverse the membrane as a helical segment. Topologically, residues 629–703 (DTPVDINCHH…LNCNWIPNKL (75 aa)) are extracellular.

This sequence belongs to the concentrative nucleoside transporter (CNT) (TC 2.A.41) family. As to quaternary structure, homotrimer.

The protein localises to the cell membrane. It catalyses the reaction thymidine(out) + 2 Na(+)(out) = thymidine(in) + 2 Na(+)(in). The catalysed reaction is cytidine(out) + 2 Na(+)(out) = cytidine(in) + 2 Na(+)(in). The enzyme catalyses uridine(out) + 2 Na(+)(out) = uridine(in) + 2 Na(+)(in). It carries out the reaction adenosine(out) + 2 Na(+)(out) = adenosine(in) + 2 Na(+)(in). It catalyses the reaction guanosine(out) + 2 Na(+)(out) = guanosine(in) + 2 Na(+)(in). The catalysed reaction is inosine(out) + 2 Na(+)(out) = inosine(in) + 2 Na(+)(in). In terms of biological role, sodium-dependent, pyrimidine- and purine-selective. Involved in the homeostasis of endogenous nucleosides. Exhibits the transport characteristics of the nucleoside transport system cib or N3 subtype (N3/cib) (with marked transport of both thymidine and inosine). Employs a 2:1 sodium/nucleoside ratio. Also able to transport gemcitabine, 3'-azido-3'-deoxythymidine (AZT), ribavirin and 3-deazauridine. This is Solute carrier family 28 member 3 (Slc28a3) from Mus musculus (Mouse).